A 273-amino-acid chain; its full sequence is 3-methyl-2-oxobutanoate hydroxymethyltransferase (273 aa).

Mg(2+) contacts are provided by Asp53 and Asp92. Residues 53 to 54, Asp92, and Lys120 each bind 3-methyl-2-oxobutanoate; that span reads DS. Glu122 serves as a coordination point for Mg(2+). The active-site Proton acceptor is Glu189.

Belongs to the PanB family. In terms of assembly, homodecamer; pentamer of dimers. It depends on Mg(2+) as a cofactor.

Its subcellular location is the cytoplasm. The enzyme catalyses 3-methyl-2-oxobutanoate + (6R)-5,10-methylene-5,6,7,8-tetrahydrofolate + H2O = 2-dehydropantoate + (6S)-5,6,7,8-tetrahydrofolate. Its pathway is cofactor biosynthesis; (R)-pantothenate biosynthesis; (R)-pantoate from 3-methyl-2-oxobutanoate: step 1/2. Functionally, catalyzes the reversible reaction in which hydroxymethyl group from 5,10-methylenetetrahydrofolate is transferred onto alpha-ketoisovalerate to form ketopantoate. The protein is 3-methyl-2-oxobutanoate hydroxymethyltransferase of Cupriavidus pinatubonensis (strain JMP 134 / LMG 1197) (Cupriavidus necator (strain JMP 134)).